Reading from the N-terminus, the 790-residue chain is Alpha,alpha-trehalose-phosphate synthase [UDP-forming] B (790 aa).

It in the N-terminal section; belongs to the glycosyltransferase 20 family. This sequence in the C-terminal section; belongs to the trehalose phosphatase family.

The catalysed reaction is D-glucose 6-phosphate + UDP-alpha-D-glucose = alpha,alpha-trehalose 6-phosphate + UDP + H(+). Its function is as follows. Synthesizes trehalose 6-phosphate, the precursor for the production of trehalose, the main carbohydrate storage reserve of the dormant spore. Trehalose accumulates in both prestalk and prespore cells and then is rapidly metabolized during terminal differentiation of stalk cells, while being stored in spores, where it serves as the principal energy and carbon source for germination. This chain is Alpha,alpha-trehalose-phosphate synthase [UDP-forming] B (tpsB), found in Dictyostelium discoideum (Social amoeba).